Here is a 683-residue protein sequence, read N- to C-terminus: Zinc finger protein 510 (683 aa).

In terms of domain architecture, KRAB spans 46–117 (VSFKDVTIEF…EEEFSNQSHP (72 aa)). The C2H2-type 1; degenerate zinc finger occupies 254 to 276 (FECNKIGKAFNDKANCVKHNSSH). C2H2-type zinc fingers lie at residues 404–426 (YKCNECGKSFCQKGHLIQHQRTH), 432–454 (FECSECGKTFSQKSHLSTHQRIH), 460–482 (YKCNECGKTFVQKSTLRGHQRIH), 488–510 (YECSECGKTFVQKSTLRDHHRIH), 516–538 (FQCNQCGKTFGQKSNLRIHQRTH), 544–566 (YQCNECEKSFWRKDHLIQHQKTH), 572–594 (FKCNECGKTFARTSTLRVHQRIH), 600–622 (FKCNECGKKFVRKAILSDHQRIH), and 628–650 (FQCNKCGKTFGQKSNLRIHQRTH).

It belongs to the krueppel C2H2-type zinc-finger protein family.

It is found in the nucleus. Functionally, may be involved in transcriptional regulation. The chain is Zinc finger protein 510 (ZNF510) from Homo sapiens (Human).